Here is a 133-residue protein sequence, read N- to C-terminus: uncharacterized protein (133 aa).

This is an uncharacterized protein from Rickettsia conorii (strain ATCC VR-613 / Malish 7).